Reading from the N-terminus, the 49-residue chain is Large ribosomal subunit protein bL33A (49 aa).

This sequence belongs to the bacterial ribosomal protein bL33 family.

The polypeptide is Large ribosomal subunit protein bL33A (Staphylococcus haemolyticus (strain JCSC1435)).